Consider the following 138-residue polypeptide: Basic phospholipase A2 DsM-b1/DsM-b1' (138 aa).

A signal peptide spans 1–16 (MRTLWIVAMCLIGVEG). Cystine bridges form between cysteine 42/cysteine 131, cysteine 44/cysteine 60, cysteine 59/cysteine 111, cysteine 65/cysteine 138, cysteine 66/cysteine 104, cysteine 73/cysteine 97, and cysteine 91/cysteine 102. Positions 43, 45, and 47 each coordinate Ca(2+). Histidine 63 is an active-site residue. Aspartate 64 provides a ligand contact to Ca(2+). Aspartate 105 is a catalytic residue.

The cofactor is Ca(2+). As to expression, expressed by the venom gland.

The protein resides in the secreted. The enzyme catalyses a 1,2-diacyl-sn-glycero-3-phosphocholine + H2O = a 1-acyl-sn-glycero-3-phosphocholine + a fatty acid + H(+). In terms of biological role, exhibits high hydrolytic activities and shows strong preference for the anionic micelles (dPPC with deoxycholate) to the zwitterionic micelles (dPPC with Triton X-100). PLA2 catalyzes the calcium-dependent hydrolysis of the 2-acyl groups in 3-sn-phosphoglycerides. The chain is Basic phospholipase A2 DsM-b1/DsM-b1' from Daboia siamensis (Eastern Russel's viper).